The sequence spans 292 residues: GID complex substrate-recognition subunit 10 (292 aa).

This sequence belongs to the GID4/VID24 family. As to quaternary structure, substrate-recognition component of the GID/CTLH ubiquitin ligase complex. In the absence of stress, the complex exists as an inactive anticipatory complex (GID(Ant)), composed of VID30/GID1, the E3 ubiquitin-ligase RMD5/GID2, VID28/GID5, GID8, and the RING-like subunit FYV10/GID9, awaiting a substrate receptor to form the active E3 ligase complex. When cells are shifted to glucose-containing medium, the substrate receptor VID24/GID4 is induced and becomes part of the complex, named GID(SR4). Under osmotic or heat stress, the substrate receptor GID10 is induced and becomes part of the complex, named GID(SR10). Interacts with proteins that have an N-terminal Pro/N-degron, including ART2.

Its function is as follows. Substrate-recognition component of the GID E3 ligase complex recruiting N termini and catalyzing ubiquitination of proteins targeted for degradation. GID E3 is regulated through assembly with interchangeable N-degron-binding substrate receptors induced by distinct environmental perturbations. Required for the adaptation to osmotic or heat stress. Required for the regulation of protein levels of the adapter protein ART2, a component of the ART-Rsp5 ubiquitin ligase pathway, part of the plasma membrane quality control. Specific for substrates with an N-terminal Pro (Pro/N-degron), including ART2. Has high affinity for the N-terminal sequence Pro-Tyr-Ile-Thr, and also recognizes nonproline residues such as Met-Tyr-Ile-Thr-Val or Val-Cys-Phe-His. This is GID complex substrate-recognition subunit 10 from Saccharomyces cerevisiae (strain ATCC 204508 / S288c) (Baker's yeast).